Reading from the N-terminus, the 220-residue chain is Adenylate kinase (220 aa).

Residue glycine 10–threonine 15 coordinates ATP. The interval serine 30 to valine 59 is NMP. AMP is bound by residues threonine 31, arginine 36, lysine 57–valine 59, glycine 85–arginine 88, and glutamine 92. The tract at residues glycine 122 to aspartate 159 is LID. Residues arginine 123 and threonine 132–tyrosine 133 each bind ATP. AMP contacts are provided by arginine 156 and arginine 167. Glycine 206 is an ATP binding site.

Belongs to the adenylate kinase family. In terms of assembly, monomer.

It is found in the cytoplasm. It catalyses the reaction AMP + ATP = 2 ADP. It participates in purine metabolism; AMP biosynthesis via salvage pathway; AMP from ADP: step 1/1. In terms of biological role, catalyzes the reversible transfer of the terminal phosphate group between ATP and AMP. Plays an important role in cellular energy homeostasis and in adenine nucleotide metabolism. The protein is Adenylate kinase of Burkholderia vietnamiensis (strain G4 / LMG 22486) (Burkholderia cepacia (strain R1808)).